The chain runs to 105 residues: uncharacterized protein (105 aa).

This is an uncharacterized protein from Saccharolobus islandicus (Sulfolobus islandicus).